The following is a 494-amino-acid chain: Solute carrier family 2, facilitated glucose transporter member 3 (494 aa).

Residues M1–L10 lie on the Cytoplasmic side of the membrane. Residues I11–N32 traverse the membrane as a helical segment. Residues A33 to S64 are Extracellular-facing. N-linked (GlcNAc...) asparagine glycosylation occurs at N43. The helical transmembrane segment at L65–V85 threads the bilayer. The Cytoplasmic portion of the chain corresponds to N86–R90. A helical transmembrane segment spans residues R91–C111. The Extracellular segment spans residues K112–E118. A helical membrane pass occupies residues M119 to I142. Residues G143–A153 lie on the Cytoplasmic side of the membrane. Residues F154 to L174 form a helical membrane-spanning segment. Q159 is a D-glucose binding site. At K175 to L183 the chain is on the extracellular side. The chain crosses the membrane as a helical span at residues W184–F204. Residues C205–P269 are Cytoplasmic-facing. Residue T232 is modified to Phosphothreonine. A helical membrane pass occupies residues I270 to Y290. Residues Q277–S279 form an important for selectivity against fructose region. D-glucose-binding positions include Q280 to Q281 and N286. At Y291–P304 the chain is on the extracellular side. A helical membrane pass occupies residues V305–L325. Position 315 (N315) interacts with D-glucose. At V326–R331 the chain is on the cytoplasmic side. A helical membrane pass occupies residues R332–S352. The Extracellular segment spans residues L353–S363. The chain crosses the membrane as a helical span at residues F364–V389. The D-glucose site is built by E378 and W386. Residues A390–P399 are Cytoplasmic-facing. A helical transmembrane segment spans residues A400–F420. The Extracellular portion of the chain corresponds to P421–A429. Residues Y430–V450 traverse the membrane as a helical segment. Topologically, residues P451–A494 are cytoplasmic. A disordered region spans residues T473–A494. The span at N484–A494 shows a compositional bias: polar residues. S485 is subject to Phosphoserine. Position 492 is a phosphothreonine (T492).

This sequence belongs to the major facilitator superfamily. Sugar transporter (TC 2.A.1.1) family. Glucose transporter subfamily. As to quaternary structure, interacts with SMIM43; the interaction may promote SLC2A3-mediated glucose transport to meet the energy needs of mesendoderm differentiation. Detected in placenta.

The protein localises to the cell membrane. The protein resides in the perikaryon. It localises to the cell projection. It catalyses the reaction D-glucose(out) = D-glucose(in). It carries out the reaction D-galactose(in) = D-galactose(out). Deoxyglucose transport is inhibited by D-glucose, D-galactose and maltose. Galactose transport is inhibited by D-glucose and maltose. Functionally, facilitative glucose transporter. Can also mediate the uptake of various other monosaccharides across the cell membrane. Mediates the uptake of glucose, 2-deoxyglucose, galactose, mannose, xylose and fucose, and probably also dehydroascorbate. Does not mediate fructose transport. Required for mesendoderm differentiation. In Ovis aries (Sheep), this protein is Solute carrier family 2, facilitated glucose transporter member 3.